We begin with the raw amino-acid sequence, 144 residues long: D-aminoacyl-tRNA deacylase (144 aa).

Positions 136–137 (GP) match the Gly-cisPro motif, important for rejection of L-amino acids motif.

The protein belongs to the DTD family. Homodimer.

Its subcellular location is the cytoplasm. The catalysed reaction is glycyl-tRNA(Ala) + H2O = tRNA(Ala) + glycine + H(+). It carries out the reaction a D-aminoacyl-tRNA + H2O = a tRNA + a D-alpha-amino acid + H(+). An aminoacyl-tRNA editing enzyme that deacylates mischarged D-aminoacyl-tRNAs. Also deacylates mischarged glycyl-tRNA(Ala), protecting cells against glycine mischarging by AlaRS. Acts via tRNA-based rather than protein-based catalysis; rejects L-amino acids rather than detecting D-amino acids in the active site. By recycling D-aminoacyl-tRNA to D-amino acids and free tRNA molecules, this enzyme counteracts the toxicity associated with the formation of D-aminoacyl-tRNA entities in vivo and helps enforce protein L-homochirality. The sequence is that of D-aminoacyl-tRNA deacylase from Actinobacillus pleuropneumoniae serotype 5b (strain L20).